We begin with the raw amino-acid sequence, 1649 residues long: MATDSASCEPDLSRAPGDAEGATAEAAKKEFDVDTLSKSELRMLLSVMEGELEARDLVIEALRARRKEVFIQERYGRFNLNDPFLALQRDYEAGAGDKEKPVCTNPLSILEAVMAHCRKMQERMSAQLAAAESRQKKLEMEKLQLQALEQEHKKLAAHLEEERGKNKHVVLMLVKECKQLSGKVVEEAQKLEEVMVKLEEEKKKTSELEDQLSAEKQRSAGMEAQLEKQLFEFDTEREQLRAKLTREEAHTTDLKEEIDKMKKMMEQMKKGNDGKPGLSLPRKTKDKRLASISVATEGPVTRSVACQTDVVTESTDPVKKLPLSVPIKPSTGSPLVSTNTKGNVGPSALLIRPGIDRQASHSDLGPSPPTALPSSASRIEENGPSAGNAPDLSNSTPSTPSGTAPAAAQTLGAAPQNHSQAPPVHSLHSPCANTHPGLNPRIQAARFRFQGNANDPDQNGNNTQSPPSRDVSPTSRDNLVAKQLARNTVTQALSRFTSPQAGASSRLGASPGGDAGTCPPVGRTGLKTPGAARVDRGNPPPIPPKKPGLSQTPSPPHPQLRASNAGAKVDNKIVASPPSTLPQGTKVVNEENVPKSSSPQLPPKPSIDLTVASAGCPVSALATSQVGAWPAETPGLNQPACTDSSLVIPTTVAFRSSINPVSASSRSPGASDSLLVTASGWSPSLTPLLMSGGPAPLAGRPTLLQQAAAQGNVTLLSMLLNEEGLDINYCCEDSHSALYSAAKNGHTDCVRLLLNAEARVDAADKNGFTPLCVAAAQGHFECIELLTAYNANINHSAAGGQTPLYLACKTGNKECIKLLLEAGTDRSIKTRDGWTPIHAAVDTGNVDSLKLLMYHRVPAPGNSLSAEEPKSGLFSLNGGESPPGSSKPVVPADLINHADKEGWTAAHIAASKGFKNCLEILCRHGGLEPERRDKCNRTVHDVATDDCKHLLENLNALKIPLRISVGEIQPSNDGSDDFECEHTICTLNIRKQTSWEDFSKAVSQALTNHFQAISSDGCWGLEDGTLNNTTDSCIGLGTSSIQSIMLGSIPWSTGQSFSQSPWDFMKKKKVEQVTVLLSGPQEGCLSSVTYTSMIPLQMLQNYLRLVEQYHNVIFHGPEGSLQDYIANQLALCMKHRQMAAGFPCEIVRAEVDSGFSKEQLVDVFISNACLIPVKQFPVKKKIIVILENLEKSSLSELLGDFLAPLENRSTESPCTFQKGNGTSECYYFHENCFLLGTLAKACLQGSDLLVQQHFRWVQLRWDCEPSQGLLQRFLRRKAVSKFRGQLPAPCDPVCKIVDWVISVWRQLNSCLARLGTPEALLGPKYFLSCPVVPGHAQATVKWMSKLWNAIIAPRVQEAILSRAAMNKQPGARQTASKKHPSQGQQAVVRAALSILLNKAILHGCPLPRTELDQQIADFKGGSFPLSIVSSYSKKKGESAAWRKVNTSPRKKPGHFSSPMWNKPDLKHEGMRNKSVPHLNINRSSSLSKQQSLENDLSMTLTLDHRLSLGSDDEADLVKELQSMCSSKSESDISKIADSREDLRTFDSSRTNPVTSAPVNLRMPVPQKEASPLSSHQTTECSNSKSKTELGVSRVKSFLPVPRSKVAQCSQNTKRSSSSSSNTRQLEINNNSKEENWNVDKHEHVEKRNK.

Residues 1-27 (MATDSASCEPDLSRAPGDAEGATAEAA) form a disordered region. Residues 15–25 (APGDAEGATAE) show a composition bias toward low complexity. A coiled-coil region spans residues 118–275 (RKMQERMSAQ…EQMKKGNDGK (158 aa)). Disordered regions lie at residues 322-439 (PLSV…PGLN), 451-476 (GNANDPDQNGNNTQSPPSRDVSPTSR), and 492-604 (ALSR…LPPK). Positions 330-342 (STGSPLVSTNTKG) are enriched in polar residues. Residues 395–416 (STPSTPSGTAPAAAQTLGAAPQ) show a composition bias toward low complexity. Positions 492–503 (ALSRFTSPQAGA) are enriched in polar residues. Asymmetric dimethylarginine is present on arginine 495. 6 ANK repeats span residues 699-729 (GRPTLLQQAAAQGNVTLLSMLLNEEGLDINY), 733-762 (DSHSALYSAAKNGHTDCVRLLLNAEARVDA), 766-795 (NGFTPLCVAAAQGHFECIELLTAYNANINH), 799-828 (GGQTPLYLACKTGNKECIKLLLEAGTDRSI), 832-861 (DGWTPIHAAVDTGNVDSLKLLMYHRVPAPG), and 901-931 (EGWTAAHIAASKGFKNCLEILCRHGGLEPER). The disordered stretch occupies residues 1438–1471 (SAAWRKVNTSPRKKPGHFSSPMWNKPDLKHEGMR). Serine 1510 is subject to Phosphoserine. The interval 1527–1649 (KSESDISKIA…KHEHVEKRNK (123 aa)) is disordered. Residues 1528 to 1546 (SESDISKIADSREDLRTFD) show a composition bias toward basic and acidic residues. Polar residues-rich tracts occupy residues 1547–1557 (SSRTNPVTSAP), 1571–1584 (PLSSHQTTECSNSK), and 1621–1630 (NTRQLEINNN). A compositionally biased stretch (basic and acidic residues) spans 1631–1649 (SKEENWNVDKHEHVEKRNK).

Interacts with CTTN/cortactin SH3 domain. Interacts with STRN, STRN4/zinedin and MOB4/phocein; this interactions mediate the association with the STRIPAK core complex and may regulate dendritic spine distribution of the STRIPAK complex in hippocampal neurons. Activation of glutamate receptors weakens the interaction with STRN and STRN4.

The protein localises to the cytoplasm. It is found in the cell cortex. It localises to the cell projection. Its subcellular location is the dendritic spine. Functionally, regulates the dendritic spine distribution of CTTN/cortactin in hippocampal neurons, and thus controls dendritic spinogenesis and dendritic spine maintenance. Associates with the striatin-interacting phosphatase and kinase (STRIPAK) core complex to regulate dendritic spine distribution of the STRIPAK complex in hippocampal neurons. This is Cortactin-binding protein 2 (Cttnbp2) from Rattus norvegicus (Rat).